Consider the following 234-residue polypeptide: uncharacterized protein (234 aa).

The tRNA-binding domain occupies 103-211 (LAKKVPFVVC…SHIKIGKSFL (109 aa)).

This is an uncharacterized protein from Mycoplasma pneumoniae (strain ATCC 29342 / M129 / Subtype 1) (Mycoplasmoides pneumoniae).